The primary structure comprises 159 residues: NADH-quinone oxidoreductase subunit B (159 aa).

The [4Fe-4S] cluster site is built by cysteine 36, cysteine 37, cysteine 102, and cysteine 132.

Belongs to the complex I 20 kDa subunit family. In terms of assembly, NDH-1 is composed of 14 different subunits. Subunits NuoB, C, D, E, F, and G constitute the peripheral sector of the complex. The cofactor is [4Fe-4S] cluster.

The protein localises to the cell inner membrane. It catalyses the reaction a quinone + NADH + 5 H(+)(in) = a quinol + NAD(+) + 4 H(+)(out). Its function is as follows. NDH-1 shuttles electrons from NADH, via FMN and iron-sulfur (Fe-S) centers, to quinones in the respiratory chain. Couples the redox reaction to proton translocation (for every two electrons transferred, four hydrogen ions are translocated across the cytoplasmic membrane), and thus conserves the redox energy in a proton gradient. In Paracidovorax citrulli (strain AAC00-1) (Acidovorax citrulli), this protein is NADH-quinone oxidoreductase subunit B.